Consider the following 211-residue polypeptide: Large ribosomal subunit protein uL3 (211 aa).

Gln-150 carries the N5-methylglutamine modification.

It belongs to the universal ribosomal protein uL3 family. Part of the 50S ribosomal subunit. Forms a cluster with proteins L14 and L19. Post-translationally, methylated by PrmB.

One of the primary rRNA binding proteins, it binds directly near the 3'-end of the 23S rRNA, where it nucleates assembly of the 50S subunit. The polypeptide is Large ribosomal subunit protein uL3 (Pseudomonas syringae pv. tomato (strain ATCC BAA-871 / DC3000)).